The chain runs to 164 residues: Protein phosphatase 1 regulatory subunit 14C (164 aa).

Residues 1-19 are compositionally biased toward gly residues; it reads MSVVTGGGEAAGGGGGGGA. Residues 1 to 70 are disordered; it reads MSVVTGGGEA…QQQRRHQQGK (70 aa). Position 2 is an N-acetylserine (Ser-2). The residue at position 25 (Ser-25) is a Phosphoserine. The residue at position 27 (Arg-27) is an Omega-N-methylarginine. Ser-33 bears the Phosphoserine mark. Low complexity predominate over residues 50–62; the sequence is VTTVAAAGQVQQQ. A Phosphothreonine; by ILK1 modification is found at Thr-72.

It belongs to the PP1 inhibitor family. Post-translationally, the main inhibitory site appears to be Thr-72. Has over 600-fold higher inhibitory activity when phosphorylated, creating a molecular switch for regulating the phosphorylation status of PPP1CA substrates and smooth muscle contraction. In terms of tissue distribution, detected in heart, muscle, spinal cord, hippocampus, hypothalamus, thalamus, midbrain, brain stem, cerebellum, brain cortex and olfactory bulb.

The protein localises to the endomembrane system. In terms of biological role, inhibitor of the PP1 regulatory subunit PPP1CA. The protein is Protein phosphatase 1 regulatory subunit 14C (Ppp1r14c) of Mus musculus (Mouse).